The primary structure comprises 160 residues: MMEQSLIPQTPVLPLTAQRTVKRALTLLDRHLRETGVAFTSTQAARDWLKLKMAGLEREEFMMLYLNQQNQLIAHETLFAGSISSTEVHPREVVKRALYFNAAAVILAHNHPSGDTTPSQADKTITQRLVQALQLVDIRVPDHLIVGGRQIYSFAEHGLL.

The MPN domain occupies 38–160; sequence AFTSTQAARD…IYSFAEHGLL (123 aa). The Zn(2+) site is built by His109, His111, and Asp122. Positions 109–122 match the JAMM motif motif; sequence HNHPSGDTTPSQAD.

It belongs to the UPF0758 family.

This is UPF0758 protein YfjY (yfjY) from Escherichia coli (strain K12).